Consider the following 128-residue polypeptide: Conopressin-conophysin (128 aa).

The signal sequence occupies residues 1–27 (MTRSAMQMGRLTLVLCLLLLLLLTTQA). Cys28 and Cys33 form a disulfide bridge. A Glycine amide modification is found at Gly36. Positions 37 to 44 (GKRDVDER) are excised as a propeptide. Cystine bridges form between Cys50-Cys90, Cys53-Cys64, Cys58-Cys80, Cys65-Cys70, Cys97-Cys115, Cys109-Cys127, and Cys116-Cys121.

The protein belongs to the vasopressin/oxytocin family. Expressed by the venom gland.

The protein resides in the secreted. In terms of biological role, targets vasopressin-oxytocin related receptors. Is more active on fish receptors than on their human counterparts, supporting an evolved role of this conopressin in the envenomation process. Acts as an agonist on zebrafish vasopressin receptors V1a1R (EC(50)=10.6 nM), V1a2R (EC(50)=44.06 nM, partial agonist), V2R (EC(50)=299.2 nM) and oxytocin receptor (EC(50)=353.73 nM, partial agonist). Shows a weaker activity on human receptors AVPR1B (EC(50)=51.92 nM), AVPR1A (EC(50)=123.78 nM), AVPR2 (EC(50)=299.2 nM) and oxytocin (OXTR) receptor (EC(50)=455.66 nM, partial agonist). In vivo, exhibits grooming and scratching behavior in mice, following intracerebral injection. The polypeptide is Conopressin-conophysin (Conus geographus (Geography cone)).